The sequence spans 514 residues: MEDLIVAIVVGAFSSAISIFVVRKLDRAKFEVFIEQAKAKAKVIEHEAEMALKDAQLKAKIECDREFKSAKREYEAMLLKIERKERELNEHLESELKAIKLEKEQIVEKNRKITTLKDGLEEQKKTYEEKTLEAIKILENACGLTQSEAKELMLKKVKEDSRAEISSIFRKRYKIAEQNTKNEINNMLSQAVTRYAGEFAAERLINNIPLNDEETKGKIIGKEGRNIKALEMLLGVDIIIDDTPNTITVSSFNLYRRAVATKTIRELLEDGRIQPARIEEIYKKVKSEFDKNIQKEGEDVVMELGIKTMHPELIKLVGRLRYRASYGQNALAHTLEVAHLSGLLASQMGGDAILARRAGLLHDIGKALTHEAPGSHVDLGAEICKRYDECDTVINAIYAHHGHEEPINVESAAVCAADALSAARPGARREVLESFLKRVEEVENISTSKLGVLNAYAINAGREVRVIVKAELVNDDEAVLLATEIAKEIEEKVQYPGEIKVNVIRETRAESYAR.

The chain crosses the membrane as a helical span at residues 2 to 22; the sequence is EDLIVAIVVGAFSSAISIFVV. Residues 204-268 form the KH domain; the sequence is LINNIPLNDE…VATKTIRELL (65 aa). Residues 330–423 enclose the HD domain; it reads ALAHTLEVAH…VCAADALSAA (94 aa).

This sequence belongs to the RNase Y family.

Its subcellular location is the cell membrane. Functionally, endoribonuclease that initiates mRNA decay. In Aliarcobacter butzleri (strain RM4018) (Arcobacter butzleri), this protein is Ribonuclease Y.